The primary structure comprises 61 residues: Small ribosomal subunit protein uS14B (61 aa).

Residues C24, C27, C40, and C43 each contribute to the Zn(2+) site.

It belongs to the universal ribosomal protein uS14 family. Zinc-binding uS14 subfamily. In terms of assembly, part of the 30S ribosomal subunit. Contacts proteins S3 and S10. Zn(2+) serves as cofactor.

In terms of biological role, binds 16S rRNA, required for the assembly of 30S particles and may also be responsible for determining the conformation of the 16S rRNA at the A site. This chain is Small ribosomal subunit protein uS14B, found in Ligilactobacillus salivarius (strain UCC118) (Lactobacillus salivarius).